The primary structure comprises 787 residues: Endonuclease MutS2 (787 aa).

An ATP-binding site is contributed by 331–338 (GPNTGGKT). Residues 711–786 (IDVRGKTSDD…EQGVTIVELR (76 aa)) form the Smr domain.

It belongs to the DNA mismatch repair MutS family. MutS2 subfamily. In terms of assembly, homodimer. Binds to stalled ribosomes, contacting rRNA.

Endonuclease that is involved in the suppression of homologous recombination and thus may have a key role in the control of bacterial genetic diversity. Functionally, acts as a ribosome collision sensor, splitting the ribosome into its 2 subunits. Detects stalled/collided 70S ribosomes which it binds and splits by an ATP-hydrolysis driven conformational change. Acts upstream of the ribosome quality control system (RQC), a ribosome-associated complex that mediates the extraction of incompletely synthesized nascent chains from stalled ribosomes and their subsequent degradation. Probably generates substrates for RQC. This Caldicellulosiruptor saccharolyticus (strain ATCC 43494 / DSM 8903 / Tp8T 6331) protein is Endonuclease MutS2.